Here is a 620-residue protein sequence, read N- to C-terminus: 1-deoxy-D-xylulose-5-phosphate synthase (620 aa).

Thiamine diphosphate is bound by residues His80 and 121 to 123 (GHS). Asp152 provides a ligand contact to Mg(2+). Residues 153–154 (GA), Asn181, Tyr288, and Glu370 each bind thiamine diphosphate. Position 181 (Asn181) interacts with Mg(2+).

This sequence belongs to the transketolase family. DXPS subfamily. Homodimer. The cofactor is Mg(2+). Thiamine diphosphate serves as cofactor.

The enzyme catalyses D-glyceraldehyde 3-phosphate + pyruvate + H(+) = 1-deoxy-D-xylulose 5-phosphate + CO2. It functions in the pathway metabolic intermediate biosynthesis; 1-deoxy-D-xylulose 5-phosphate biosynthesis; 1-deoxy-D-xylulose 5-phosphate from D-glyceraldehyde 3-phosphate and pyruvate: step 1/1. Functionally, catalyzes the acyloin condensation reaction between C atoms 2 and 3 of pyruvate and glyceraldehyde 3-phosphate to yield 1-deoxy-D-xylulose-5-phosphate (DXP). This Salmonella typhi protein is 1-deoxy-D-xylulose-5-phosphate synthase.